The chain runs to 221 residues: Cytidylate kinase 1 (221 aa).

An ATP-binding site is contributed by 7–15; sequence GPSASGKSS.

The protein belongs to the cytidylate kinase family. Type 1 subfamily.

It is found in the cytoplasm. It catalyses the reaction CMP + ATP = CDP + ADP. The enzyme catalyses dCMP + ATP = dCDP + ADP. This chain is Cytidylate kinase 1, found in Borreliella afzelii (strain PKo) (Borrelia afzelii).